We begin with the raw amino-acid sequence, 59 residues long: Large ribosomal subunit protein bL32 (59 aa).

The span at 1 to 20 (MAVPKKKTSKGKRNQRHATW) shows a compositional bias: basic residues. Residues 1–22 (MAVPKKKTSKGKRNQRHATWKG) form a disordered region.

It belongs to the bacterial ribosomal protein bL32 family.

This Prochlorococcus marinus (strain NATL1A) protein is Large ribosomal subunit protein bL32.